The following is a 149-amino-acid chain: 3-dehydroquinate dehydratase 2 (149 aa).

Catalysis depends on tyrosine 24, which acts as the Proton acceptor. Substrate contacts are provided by asparagine 75, histidine 81, and aspartate 88. The Proton donor role is filled by histidine 101. Substrate is bound by residues 102–103 (LS) and arginine 112.

The protein belongs to the type-II 3-dehydroquinase family. As to quaternary structure, homododecamer.

It catalyses the reaction 3-dehydroquinate = 3-dehydroshikimate + H2O. The protein operates within metabolic intermediate biosynthesis; chorismate biosynthesis; chorismate from D-erythrose 4-phosphate and phosphoenolpyruvate: step 3/7. Catalyzes a trans-dehydration via an enolate intermediate. This is 3-dehydroquinate dehydratase 2 (aroQ2) from Pseudomonas putida (strain ATCC 47054 / DSM 6125 / CFBP 8728 / NCIMB 11950 / KT2440).